Here is a 381-residue protein sequence, read N- to C-terminus: Acetylornithine deacetylase (381 aa).

Residue His-78 participates in Zn(2+) binding. Residue Asp-80 is part of the active site. Asp-110 lines the Zn(2+) pocket. Residue Glu-142 is part of the active site. Positions 143, 167, and 353 each coordinate Zn(2+).

The protein belongs to the peptidase M20A family. ArgE subfamily. In terms of assembly, homodimer. It depends on Zn(2+) as a cofactor. Co(2+) serves as cofactor. Glutathione is required as a cofactor.

The protein resides in the cytoplasm. It carries out the reaction N(2)-acetyl-L-ornithine + H2O = L-ornithine + acetate. Its pathway is amino-acid biosynthesis; L-arginine biosynthesis; L-ornithine from N(2)-acetyl-L-ornithine (linear): step 1/1. Its function is as follows. Catalyzes the hydrolysis of the amide bond of N(2)-acetylated L-amino acids. Cleaves the acetyl group from N-acetyl-L-ornithine to form L-ornithine, an intermediate in L-arginine biosynthesis pathway, and a branchpoint in the synthesis of polyamines. In Moritella profunda, this protein is Acetylornithine deacetylase.